Consider the following 509-residue polypeptide: ATP synthase subunit alpha (509 aa).

Residue 169–176 (GDRQTGKT) coordinates ATP.

The protein belongs to the ATPase alpha/beta chains family. As to quaternary structure, F-type ATPases have 2 components, CF(1) - the catalytic core - and CF(0) - the membrane proton channel. CF(1) has five subunits: alpha(3), beta(3), gamma(1), delta(1), epsilon(1). CF(0) has three main subunits: a(1), b(2) and c(9-12). The alpha and beta chains form an alternating ring which encloses part of the gamma chain. CF(1) is attached to CF(0) by a central stalk formed by the gamma and epsilon chains, while a peripheral stalk is formed by the delta and b chains.

The protein localises to the cell inner membrane. The catalysed reaction is ATP + H2O + 4 H(+)(in) = ADP + phosphate + 5 H(+)(out). Produces ATP from ADP in the presence of a proton gradient across the membrane. The alpha chain is a regulatory subunit. This chain is ATP synthase subunit alpha, found in Rhizobium etli (strain ATCC 51251 / DSM 11541 / JCM 21823 / NBRC 15573 / CFN 42).